A 375-amino-acid polypeptide reads, in one-letter code: Type II restriction enzyme ApaLI (375 aa).

It carries out the reaction Endonucleolytic cleavage of DNA to give specific double-stranded fragments with terminal 5'-phosphates.. A subtype P restriction enzyme that recognizes the double-stranded sequence 5'-GTGCAC-3' and cleaves after G-1. This is Type II restriction enzyme ApaLI from Acetobacter pasteurianus (Acetobacter turbidans).